Reading from the N-terminus, the 456-residue chain is Bifunctional protein GlmU (456 aa).

The tract at residues 1–230 (MDKRFAVILA…FQETLGVNDR (230 aa)) is pyrophosphorylase. UDP-N-acetyl-alpha-D-glucosamine is bound by residues 9-12 (LAAG), Lys23, Gln73, and 78-79 (GT). Asp103 provides a ligand contact to Mg(2+). Positions 140, 155, 170, and 228 each coordinate UDP-N-acetyl-alpha-D-glucosamine. Position 228 (Asn228) interacts with Mg(2+). Residues 231–251 (VALSQAEMYMKERINKRHMQN) form a linker region. The segment at 252 to 456 (GVTLIDPMNT…EDYVKNIHKK (205 aa)) is N-acetyltransferase. UDP-N-acetyl-alpha-D-glucosamine-binding residues include Arg333 and Lys351. His363 serves as the catalytic Proton acceptor. UDP-N-acetyl-alpha-D-glucosamine contacts are provided by Tyr366 and Asn377. Residues 386 to 387 (NY), Ala423, and Arg440 each bind acetyl-CoA.

It in the N-terminal section; belongs to the N-acetylglucosamine-1-phosphate uridyltransferase family. In the C-terminal section; belongs to the transferase hexapeptide repeat family. As to quaternary structure, homotrimer. Mg(2+) serves as cofactor.

It is found in the cytoplasm. It catalyses the reaction alpha-D-glucosamine 1-phosphate + acetyl-CoA = N-acetyl-alpha-D-glucosamine 1-phosphate + CoA + H(+). The catalysed reaction is N-acetyl-alpha-D-glucosamine 1-phosphate + UTP + H(+) = UDP-N-acetyl-alpha-D-glucosamine + diphosphate. It functions in the pathway nucleotide-sugar biosynthesis; UDP-N-acetyl-alpha-D-glucosamine biosynthesis; N-acetyl-alpha-D-glucosamine 1-phosphate from alpha-D-glucosamine 6-phosphate (route II): step 2/2. It participates in nucleotide-sugar biosynthesis; UDP-N-acetyl-alpha-D-glucosamine biosynthesis; UDP-N-acetyl-alpha-D-glucosamine from N-acetyl-alpha-D-glucosamine 1-phosphate: step 1/1. The protein operates within bacterial outer membrane biogenesis; LPS lipid A biosynthesis. Functionally, catalyzes the last two sequential reactions in the de novo biosynthetic pathway for UDP-N-acetylglucosamine (UDP-GlcNAc). The C-terminal domain catalyzes the transfer of acetyl group from acetyl coenzyme A to glucosamine-1-phosphate (GlcN-1-P) to produce N-acetylglucosamine-1-phosphate (GlcNAc-1-P), which is converted into UDP-GlcNAc by the transfer of uridine 5-monophosphate (from uridine 5-triphosphate), a reaction catalyzed by the N-terminal domain. This is Bifunctional protein GlmU from Bacillus velezensis (strain DSM 23117 / BGSC 10A6 / LMG 26770 / FZB42) (Bacillus amyloliquefaciens subsp. plantarum).